We begin with the raw amino-acid sequence, 142 residues long: Baculoviral IAP repeat-containing protein 5 (142 aa).

Residues 18-88 (RISTFKNWPF…KHSSGCAFLS (71 aa)) form a BIR repeat. S20 carries the post-translational modification Phosphoserine; by AURKC. K23 carries the N6-acetyllysine modification. T34 carries the post-translational modification Phosphothreonine; by CDK1 and CDK15. Position 48 is a phosphothreonine (T48). Residues C57, C60, H77, and C84 each coordinate Zn(2+). Residues K90, K110, K112, and K115 each carry the N6-acetyllysine modification. T117 bears the Phosphothreonine; by AURKB mark. K129 bears the N6-acetyllysine mark.

It belongs to the IAP family. As to quaternary structure, monomer or homodimer. Exists as a homodimer in the apo state and as a monomer in the CPC-bound state. The monomer protects cells against apoptosis more efficiently than the dimer. Only the dimeric form is capable of enhancing tubulin stability in cells. When phosphorylated, interacts with LAMTOR5/HBXIP; the resulting complex binds pro-CASP9, as well as active CASP9, but much less efficiently. Component of the chromosomal passenger complex (CPC) composed of at least BIRC5/survivin, CDCA8/borealin, INCENP, AURKB or AURKC; in the complex forms a triple-helix bundle-based subcomplex with INCENP and CDCA8. Interacts with JTB. Interacts (via BIR domain) with histone H3 phosphorylated at 'Thr-3' (H3pT3). Interacts with EVI5. Interacts with GTP-bound RAN in both the S and M phases of the cell cycle. Interacts with USP9X. Interacts with tubulin. Interacts with BIRC2/c-IAP1. The acetylated form at Lys-129 interacts with STAT3. The monomeric form deacetylated at Lys-129 interacts with XPO1/CRM1. The monomeric form interacts with XIAP/BIRC4. Both the dimeric and monomeric form can interact with DIABLO/SMAC. Interacts with BIRC6/bruce. Interacts with FBXL7; this interaction facilitates the polyubiquitination and subsequent proteasomal degradation of BIRC5 by the SCF(FBXL7) E3 ubiquitin-protein ligase complex. Post-translationally, ubiquitinated by the Cul9-RING ubiquitin-protein ligase complex, leading to its degradation. Ubiquitination is required for centrosomal targeting. Deubiquitinated by USP35 or USP38; leading to stabilization. In terms of processing, acetylation at Lys-129 results in its homodimerization, while deacetylation promotes the formation of monomers which heterodimerize with XPO1/CRM1 which facilitates its nuclear export. The acetylated form represses STAT3 transactivation. The dynamic equilibrium between its acetylation and deacetylation at Lys-129 determines its interaction with XPO1/CRM1, its subsequent subcellular localization, and its ability to inhibit STAT3 transactivation. In vitro phosphorylation at Thr-117 by AURKB prevents interaction with INCENP and localization to mitotic chromosomes. Phosphorylation at Thr-48 by CK2 is critical for its mitotic and anti-apoptotic activities. Phosphorylation at Thr-34 by CDK15 is critical for its anti-apoptotic activity. Phosphorylation at Ser-20 by AURKC is critical for regulation of proper chromosome alignment and segregation, and possibly cytokinesis.

The protein localises to the cytoplasm. It is found in the nucleus. It localises to the chromosome. The protein resides in the centromere. Its subcellular location is the cytoskeleton. The protein localises to the spindle. It is found in the kinetochore. It localises to the midbody. Multitasking protein that has dual roles in promoting cell proliferation and preventing apoptosis. Component of a chromosome passage protein complex (CPC) which is essential for chromosome alignment and segregation during mitosis and cytokinesis. Acts as an important regulator of the localization of this complex; directs CPC movement to different locations from the inner centromere during prometaphase to midbody during cytokinesis and participates in the organization of the center spindle by associating with polymerized microtubules. Involved in the recruitment of CPC to centromeres during early mitosis via association with histone H3 phosphorylated at 'Thr-3' (H3pT3) during mitosis. The complex with RAN plays a role in mitotic spindle formation by serving as a physical scaffold to help deliver the RAN effector molecule TPX2 to microtubules. May counteract a default induction of apoptosis in G2/M phase. The acetylated form represses STAT3 transactivation of target gene promoters. May play a role in neoplasia. Inhibitor of CASP3 and CASP7. Essential for the maintenance of mitochondrial integrity and function. The protein is Baculoviral IAP repeat-containing protein 5 (BIRC5) of Felis catus (Cat).